The sequence spans 225 residues: UPF0758 protein XOO0495 (225 aa).

Residues 102-224 (ALSDPPSVGR…PVSLAERGWL (123 aa)) enclose the MPN domain. The Zn(2+) site is built by histidine 173, histidine 175, and aspartate 186. The JAMM motif signature appears at 173 to 186 (HNHPSGNPEPSKAD).

It belongs to the UPF0758 family.

The sequence is that of UPF0758 protein XOO0495 from Xanthomonas oryzae pv. oryzae (strain KACC10331 / KXO85).